Here is a 260-residue protein sequence, read N- to C-terminus: Acetylglutamate kinase (260 aa).

Residues 46-47, Arg-68, and Asn-160 each bind substrate; that span reads GG.

The protein belongs to the acetylglutamate kinase family. ArgB subfamily.

Its subcellular location is the cytoplasm. It catalyses the reaction N-acetyl-L-glutamate + ATP = N-acetyl-L-glutamyl 5-phosphate + ADP. It functions in the pathway amino-acid biosynthesis; L-arginine biosynthesis; N(2)-acetyl-L-ornithine from L-glutamate: step 2/4. Functionally, catalyzes the ATP-dependent phosphorylation of N-acetyl-L-glutamate. This Shewanella denitrificans (strain OS217 / ATCC BAA-1090 / DSM 15013) protein is Acetylglutamate kinase.